Consider the following 288-residue polypeptide: Diaminopimelate epimerase (288 aa).

Substrate contacts are provided by asparagine 13, glutamine 46, and asparagine 66. Cysteine 75 acts as the Proton donor in catalysis. Substrate is bound by residues 76 to 77 (GN), asparagine 166, asparagine 199, and 217 to 218 (ER). The active-site Proton acceptor is cysteine 226. 227 to 228 (GT) contacts substrate.

This sequence belongs to the diaminopimelate epimerase family. In terms of assembly, homodimer.

The protein resides in the cytoplasm. It catalyses the reaction (2S,6S)-2,6-diaminopimelate = meso-2,6-diaminopimelate. It participates in amino-acid biosynthesis; L-lysine biosynthesis via DAP pathway; DL-2,6-diaminopimelate from LL-2,6-diaminopimelate: step 1/1. Catalyzes the stereoinversion of LL-2,6-diaminopimelate (L,L-DAP) to meso-diaminopimelate (meso-DAP), a precursor of L-lysine and an essential component of the bacterial peptidoglycan. This Cupriavidus necator (strain ATCC 17699 / DSM 428 / KCTC 22496 / NCIMB 10442 / H16 / Stanier 337) (Ralstonia eutropha) protein is Diaminopimelate epimerase.